A 641-amino-acid chain; its full sequence is XK-related protein 6 (641 aa).

2 disordered regions span residues 20 to 47 and 84 to 120; these read LDEAVGSGGEEDGEPGGGGCGGGGDGSE and RSAAADGGDQPLQPPAAPGAGRQPPTPSAARPEPPPP. Residues 34-46 are compositionally biased toward gly residues; sequence PGGGGCGGGGDGS. Residues 107–120 show a composition bias toward pro residues; the sequence is PPTPSAARPEPPPP. The next 7 membrane-spanning stretches (helical) occupy residues 130–150, 159–179, 318–338, 372–392, 413–433, 442–462, and 473–493; these read LWIVLALLVFFGDVGTDLWLA, YVYFGLTLFFVLVPSLLVQSL, TLPCVSSVTSLMSLAWVLASY, VISFALFASIFQLYFGIFVVV, WEEILFNMVVGIVYIFCWFNV, MFAYYTIVLTENAALTFLWYF, and AVPALCCVFISFVAGIAMMLL.

The protein belongs to the XK family.

It localises to the cell membrane. In Homo sapiens (Human), this protein is XK-related protein 6.